A 308-amino-acid polypeptide reads, in one-letter code: Sulfate adenylyltransferase subunit 2 (308 aa).

This sequence belongs to the PAPS reductase family. CysD subfamily. In terms of assembly, heterodimer composed of CysD, the smaller subunit, and CysN.

It carries out the reaction sulfate + ATP + H(+) = adenosine 5'-phosphosulfate + diphosphate. Its pathway is sulfur metabolism; hydrogen sulfide biosynthesis; sulfite from sulfate: step 1/3. Its function is as follows. With CysN forms the ATP sulfurylase (ATPS) that catalyzes the adenylation of sulfate producing adenosine 5'-phosphosulfate (APS) and diphosphate, the first enzymatic step in sulfur assimilation pathway. APS synthesis involves the formation of a high-energy phosphoric-sulfuric acid anhydride bond driven by GTP hydrolysis by CysN coupled to ATP hydrolysis by CysD. The protein is Sulfate adenylyltransferase subunit 2 of Chromobacterium violaceum (strain ATCC 12472 / DSM 30191 / JCM 1249 / CCUG 213 / NBRC 12614 / NCIMB 9131 / NCTC 9757 / MK).